Here is a 103-residue protein sequence, read N- to C-terminus: Small ribosomal subunit protein uS10 (103 aa).

This sequence belongs to the universal ribosomal protein uS10 family. Part of the 30S ribosomal subunit.

Functionally, involved in the binding of tRNA to the ribosomes. In Paraburkholderia xenovorans (strain LB400), this protein is Small ribosomal subunit protein uS10.